Here is a 770-residue protein sequence, read N- to C-terminus: Probable zinc transporter protein DDB_G0291141 (770 aa).

At 1–36 (MAGSLDDSIYNNGRSGGGGGGFKFSKGFNKDSISKR) the chain is on the cytoplasmic side. Residues 37 to 57 (IIMMLFFSKGIRAWSCIILLY) traverse the membrane as a helical segment. Over 58–62 (FLQSS) the chain is Extracellular. A helical transmembrane segment spans residues 63–83 (ISIISASFYMCLFSAIFSVVV). Residues 84–100 (EKPWNLLSSLRPSQIKK) lie on the Cytoplasmic side of the membrane. Residues 101 to 117 (IIYHSIFNLLIIITWNS) form a helical membrane-spanning segment. Residues 118–123 (SIKFIG) lie on the Extracellular side of the membrane. The chain crosses the membrane as a helical span at residues 124–146 (PIGSILASDYTFSTYPLIFNSLL). Over 147–154 (QGNFLATD) the chain is Cytoplasmic. The chain crosses the membrane as a helical span at residues 155–175 (MSRGSIMLMIGYFLIPLFGIS). Residues 176-184 (NRLDILGYT) lie on the Extracellular side of the membrane. The helical transmembrane segment at 185-205 (SSQVFMIGLFSLIVHNVLVLW) threads the bilayer. Topologically, residues 206–224 (KKTIVRSWNSGSSGGKNKL) are cytoplasmic. A helical transmembrane segment spans residues 225–245 (SSLGSCVSTIILFVFKLFEGF). Residues 246–262 (SSGSSGSDSINQVSYSQ) are Extracellular-facing. The helical transmembrane segment at 263–283 (LFVIAIITFILYSLNQFIDDV) threads the bilayer. Topologically, residues 284-291 (SEKELTFN) are cytoplasmic. Residues 292-312 (VLSKVSLTSSVIFGLLAALFI) traverse the membrane as a helical segment. Residues 313 to 316 (GFKD) lie on the Extracellular side of the membrane. Residues 317 to 337 (FFHPILILSFIFIINAIHILY) traverse the membrane as a helical segment. Over 338-404 (SKSNDIQPMT…QIVDKPTSRR (67 aa)) the chain is Cytoplasmic. The chain crosses the membrane as a helical span at residues 405–425 (IFTFLVINLMFMFVEMAYGIW). Topologically, residues 426–434 (TNSLGLITD) are extracellular. A helical transmembrane segment spans residues 435–455 (ACHMFFDATALFIALVAEVIS). Residues 456–469 (QWKQNDKYSYGYGR) are Cytoplasmic-facing. The helical transmembrane segment at 470 to 490 (FQVLSGFVNGIFLIFIAVTIL) threads the bilayer. Residues 491–507 (MESVERLLEPPEINTDK) are Extracellular-facing. The helical transmembrane segment at 508 to 528 (LLLVSVLGFIINLIGIFSFHG) threads the bilayer. The Cytoplasmic portion of the chain corresponds to 529 to 592 (DHGHSHGGGG…GVFLHLLADT (64 aa)). Residues 532–566 (HSHGGGGGHSHGGGEKKEKHHGHSHGGHGDHQQVT) form a disordered region. Residues 593–613 (LGSVGVIVSSLIIQIWGYTLA) form a helical membrane-spanning segment. Residue aspartate 614 is a topological domain, extracellular. A helical membrane pass occupies residues 615 to 635 (PICSLLISILIFLSVLPLIAN). The Cytoplasmic portion of the chain corresponds to 636–770 (TAKTLLQCTP…SSSSHHHRHN (135 aa)). Residues 751–770 (DIHHNHSSSSSSSSHHHRHN) form a disordered region.

Belongs to the cation diffusion facilitator (CDF) transporter (TC 2.A.4) family. SLC30A subfamily.

The protein resides in the membrane. Functionally, may be involved in zinc transport from the cytoplasm to either intracellular organelles or extracellular spaces. This is Probable zinc transporter protein DDB_G0291141 from Dictyostelium discoideum (Social amoeba).